We begin with the raw amino-acid sequence, 295 residues long: NADPH-dependent reductive aminase (295 aa).

A signal peptide spans 1–18; sequence MSKHIGIFGLGAMGTALA. 6–20 contacts NADP(+); it reads GIFGLGAMGTALAAK.

It belongs to the HIBADH-related family. Homodimer. NADPH serves as cofactor.

Its function is as follows. NADPH-dependent reductive aminase that catalyzes the reductive coupling of a broad set of carbonyl compounds with a variety of primary and secondary amines. Possesses remarkably high activity for the reductive amination of ketones and amines, often with high stereoselectivity and in some cases with ketone:amine ratios as low as 1:1. The cofactor NADPH, the carbonyl compound and the amine are added to the enzyme in that sequence, followed by the release of product, NADP(+) being released at last. RedAm is also able to act in the reverse, oxidative direction and exhibits activity in the dehydrogenation of amines to yield imines. The highest activity is found for 1-methyl-tetrahydroquinoline and acyclic amines are also found to be transformed. This Aspergillus oryzae (strain ATCC 42149 / RIB 40) (Yellow koji mold) protein is NADPH-dependent reductive aminase.